A 455-amino-acid polypeptide reads, in one-letter code: Argininosuccinate lyase (455 aa).

This sequence belongs to the lyase 1 family. Argininosuccinate lyase subfamily.

The protein localises to the cytoplasm. It carries out the reaction 2-(N(omega)-L-arginino)succinate = fumarate + L-arginine. It functions in the pathway amino-acid biosynthesis; L-arginine biosynthesis; L-arginine from L-ornithine and carbamoyl phosphate: step 3/3. The polypeptide is Argininosuccinate lyase (Roseiflexus sp. (strain RS-1)).